Here is a 314-residue protein sequence, read N- to C-terminus: DNA-directed RNA polymerase subunit alpha (314 aa).

The alpha N-terminal domain (alpha-NTD) stretch occupies residues 1–229 (MLESKLKAPV…EHLNYFANPE (229 aa)). The segment at 246–314 (SAEEDLDLPL…LAKKGFTLKE (69 aa)) is alpha C-terminal domain (alpha-CTD).

This sequence belongs to the RNA polymerase alpha chain family. Homodimer. The RNAP catalytic core consists of 2 alpha, 1 beta, 1 beta' and 1 omega subunit. When a sigma factor is associated with the core the holoenzyme is formed, which can initiate transcription.

It catalyses the reaction RNA(n) + a ribonucleoside 5'-triphosphate = RNA(n+1) + diphosphate. Functionally, DNA-dependent RNA polymerase catalyzes the transcription of DNA into RNA using the four ribonucleoside triphosphates as substrates. The chain is DNA-directed RNA polymerase subunit alpha (rpoA) from Thermus aquaticus.